We begin with the raw amino-acid sequence, 192 residues long: dTTP/UTP pyrophosphatase (192 aa).

Asp75 functions as the Proton acceptor in the catalytic mechanism.

It belongs to the Maf family. YhdE subfamily. A divalent metal cation is required as a cofactor.

It is found in the cytoplasm. The enzyme catalyses dTTP + H2O = dTMP + diphosphate + H(+). The catalysed reaction is UTP + H2O = UMP + diphosphate + H(+). Its function is as follows. Nucleoside triphosphate pyrophosphatase that hydrolyzes dTTP and UTP. May have a dual role in cell division arrest and in preventing the incorporation of modified nucleotides into cellular nucleic acids. This Bdellovibrio bacteriovorus (strain ATCC 15356 / DSM 50701 / NCIMB 9529 / HD100) protein is dTTP/UTP pyrophosphatase.